Consider the following 189-residue polypeptide: Protein jagunal homolog (189 aa).

The Cytoplasmic portion of the chain corresponds to 1-34 (MSSRGVRAAGTDGNDFQNRQRIAQHYQESAQYKS). The helical transmembrane segment at 35 to 55 (VLKWFFVPHFLILVFMWLKVG) threads the bilayer. The Lumenal portion of the chain corresponds to 56 to 75 (SEFLRYNFGWKNAFFERLDM). A helical transmembrane segment spans residues 76 to 96 (PAAYPWEYVWCLSFIPIVLAL). Topologically, residues 97 to 105 (SSFQRNKLK) are cytoplasmic. Residues 106–126 (VLHYAYYAEFICGIFPCMIGL) traverse the membrane as a helical segment. At 127–150 (GGQLPELLEYANDMEGSNTPTFKG) the chain is on the lumenal side. The chain crosses the membrane as a helical span at residues 151–171 (IFPMVIIWYIFFAVALQIHGF). The Cytoplasmic segment spans residues 172–189 (SMYFMHHLAAAWAPVKRD).

It belongs to the jagunal family.

It is found in the endoplasmic reticulum membrane. In Caenorhabditis briggsae, this protein is Protein jagunal homolog.